The sequence spans 240 residues: MGNCQAGHNLHLCLAHHPPLVCATLILLLLGLSGLGLGSFLLTHRTGLRSPDIPQDWVSFLRSFGQLTLCPRNGTVTGKWRGSHVVGLLTTLNFGDGPDRNKTRTFQATVLGSQMGLKGSSAGQLVLITARVTTERTAGTCLYFSAVPGILPSSQPPISCSEEGAGNATLSPRMGEECVSVWSHEGLVLTKLLTSEELALCGSRLLVLGSFLLLFCGLLCCVTAMCFHPRRESHWSRTRL.

A signal peptide spans 1–38 (MGNCQAGHNLHLCLAHHPPLVCATLILLLLGLSGLGLG). Residues 39–204 (SFLLTHRTGL…SEELALCGSR (166 aa)) are Extracellular-facing. N-linked (GlcNAc...) asparagine glycans are attached at residues Asn-73, Asn-101, and Asn-167. Residues 205-225 (LLVLGSFLLLFCGLLCCVTAM) form a helical membrane-spanning segment. At 226 to 240 (CFHPRRESHWSRTRL) the chain is on the cytoplasmic side.

Interacts with IGFBP3. Interacts with CASP8. As to expression, widely expressed in normal tissues but suppressed in prostate and breast tumor.

The protein resides in the cell membrane. Cell death receptor specific for IGFBP3, may mediate caspase-8-dependent apoptosis upon ligand binding. The polypeptide is Insulin-like growth factor-binding protein 3 receptor (TMEM219) (Homo sapiens (Human)).